Reading from the N-terminus, the 84-residue chain is Beta-mammal/insect toxin Ts1 (84 aa).

The first 20 residues, 1–20, serve as a signal peptide directing secretion; the sequence is MKGMILFISCLLLIGIVVEC. One can recognise an LCN-type CS-alpha/beta domain in the interval 21–82; the sequence is KEGYLMDHEG…VWDRATNKCG (62 aa). 4 disulfide bridges follow: C31-C81, C35-C57, C43-C62, and C47-C64. At C81 the chain carries Cysteine amide.

This sequence belongs to the long (4 C-C) scorpion toxin superfamily. Sodium channel inhibitor family. In terms of processing, C-terminal amidation is important for high activity. In terms of tissue distribution, expressed by the venom gland.

The protein localises to the secreted. Voltage-gated sodium channels (Nav) gating-modifier. Acts both as alpha- and beta-toxin, since it affects not only activation but also inactivation of Nav channels. Binds to Nav domain DII and impairs the four Nav channel voltage sensors movements. Depending on Nav channel subtypes tested, can also bind Nav domains DIII (low affinity) and DIV (very low affinity). Acts on almost all the Nav channels tested (mammalian Nav1.2/SCN2A, Nav1.3/SCN3A, Nav1.4/SCN4A, Nav1.5/SCN5A, Nav1.6/SCN8A, Nav1.9/SCN11A, and insect DmNav1). Is highly active against both mammals and insects. Irreversibly modulates DmNav channels. Other Ts1 activities have been studied, such as immunomodulation, antimicrobial activity or exocrine secretion. This toxin exhibits an antifungal activity against filamentous fungi. In vitro, it has an important immunomodulatory effect on macrophages by stimulating the release of pro-inflammatory cytokines. It also shows an activity in exocrine secretion in pancreas, stomach and adrenal gland. The sequence is that of Beta-mammal/insect toxin Ts1 from Tityus serrulatus (Brazilian scorpion).